A 320-amino-acid chain; its full sequence is Cytochrome f (320 aa).

The N-terminal stretch at 1 to 35 is a signal peptide; sequence MQNRNTFSWVKEQMTRSISVSIIIYVITRTSISNA. The heme site is built by tyrosine 36, cysteine 56, cysteine 59, and histidine 60. Residues 286–306 form a helical membrane-spanning segment; that stretch reads VQGLLFFLASIILAQIFLVLK.

This sequence belongs to the cytochrome f family. In terms of assembly, the 4 large subunits of the cytochrome b6-f complex are cytochrome b6, subunit IV (17 kDa polypeptide, petD), cytochrome f and the Rieske protein, while the 4 small subunits are PetG, PetL, PetM and PetN. The complex functions as a dimer. Requires heme as cofactor.

The protein resides in the plastid. The protein localises to the chloroplast thylakoid membrane. Functionally, component of the cytochrome b6-f complex, which mediates electron transfer between photosystem II (PSII) and photosystem I (PSI), cyclic electron flow around PSI, and state transitions. The protein is Cytochrome f of Chloranthus spicatus (Chulantree).